The primary structure comprises 282 residues: Acetyl-coenzyme A carboxylase carboxyl transferase subunit beta (282 aa).

A CoA carboxyltransferase N-terminal domain is found at 23–282 (IWTKCGQCDA…MLSKLHHQQA (260 aa)). Zn(2+) contacts are provided by cysteine 27, cysteine 30, cysteine 46, and cysteine 49. Residues 27-49 (CGQCDAVLYKTELEKQLGVCPKC) form a C4-type zinc finger.

This sequence belongs to the AccD/PCCB family. Acetyl-CoA carboxylase is a heterohexamer composed of biotin carboxyl carrier protein (AccB), biotin carboxylase (AccC) and two subunits each of ACCase subunit alpha (AccA) and ACCase subunit beta (AccD). Requires Zn(2+) as cofactor.

Its subcellular location is the cytoplasm. It carries out the reaction N(6)-carboxybiotinyl-L-lysyl-[protein] + acetyl-CoA = N(6)-biotinyl-L-lysyl-[protein] + malonyl-CoA. It functions in the pathway lipid metabolism; malonyl-CoA biosynthesis; malonyl-CoA from acetyl-CoA: step 1/1. Functionally, component of the acetyl coenzyme A carboxylase (ACC) complex. Biotin carboxylase (BC) catalyzes the carboxylation of biotin on its carrier protein (BCCP) and then the CO(2) group is transferred by the transcarboxylase to acetyl-CoA to form malonyl-CoA. The sequence is that of Acetyl-coenzyme A carboxylase carboxyl transferase subunit beta from Pseudoalteromonas atlantica (strain T6c / ATCC BAA-1087).